The primary structure comprises 384 residues: Class V chitinase CHIT5a (384 aa).

A signal peptide spans Met-1–Ser-27. N-linked (GlcNAc...) asparagine glycosylation is found at Asn-29, Asn-114, and Asn-133. Residues Gly-39 to His-384 enclose the GH18 domain. The Proton donor role is filled by Glu-152. Residues Asn-195 and Asn-234 are each glycosylated (N-linked (GlcNAc...) asparagine).

The protein belongs to the glycosyl hydrolase 18 family. Chitinase class V subfamily.

The enzyme catalyses Random endo-hydrolysis of N-acetyl-beta-D-glucosaminide (1-&gt;4)-beta-linkages in chitin and chitodextrins.. It participates in glycan degradation; chitin degradation. In terms of biological role, possesses chitinase activity in vitro toward glycol chitin, carboxymethyl-chitin, colloidal chitin, and the chitin oligosaccharides (N-acetylglucosamine) (GlcNAc)6 and (GlcNAc)5. Hydrolyzes (GlcNAc)6 into (GlcNAc)4 and (GlcNAc)2, or two (GlcNAc)3 molecules. Has the capacity to inhibit hyphal growth of the fungus Trichoderma viride in an agar-plate bioassay. The chain is Class V chitinase CHIT5a from Medicago truncatula (Barrel medic).